The chain runs to 711 residues: Zinc finger protein 175 (711 aa).

The span at 1–11 (MPADVNLSQKP) shows a compositional bias: polar residues. The disordered stretch occupies residues 1–21 (MPADVNLSQKPQVLGPEKQDG). In terms of domain architecture, KRAB spans 27–98 (VSFEDVTVDF…EAEVSHQRCQ (72 aa)). The C2H2-type 1; atypical zinc-finger motif lies at 279–301 (DGCSECGGSFTQKSHLFAQQRIH). Residues 307 to 329 (HECGKCGKAFMPQLKLSVYLTDH) form a C2H2-type 2; atypical zinc finger. A C2H2-type 3 zinc finger spans residues 335-357 (CICKECGKVFIQRSELLTHQKTH). The short motif at 359–362 (RKKP) is the Nuclear localization signal element. 12 C2H2-type zinc fingers span residues 363–385 (YKCH…QRTH), 391–413 (YECS…QKIH), 419–441 (YACS…QRIH), 447–469 (YVCI…QRSH), 475–497 (YQCH…HRIH), 503–525 (YECS…QKIH), 531–553 (HVCS…QRIH), 559–581 (YKCS…QRIH), 587–609 (YVCT…QITH), 615–637 (FVCY…QRTH), 643–665 (YECL…QRIH), and 671–693 (YVCS…QTTH).

Belongs to the krueppel C2H2-type zinc-finger protein family. Ubiquitous.

Its subcellular location is the cytoplasm. The protein resides in the nucleus. Functionally, down-regulates the expression of several chemokine receptors. Interferes with HIV-1 replication by suppressing Tat-induced viral LTR promoter activity. The polypeptide is Zinc finger protein 175 (ZNF175) (Homo sapiens (Human)).